Consider the following 921-residue polypeptide: Respiratory burst oxidase homolog protein D (921 aa).

Residues 1-71 form a disordered region; that stretch reads MKMRRGNSSN…RSNSVAGGRG (71 aa). Topologically, residues 1–376 are cytoplasmic; that stretch reads MKMRRGNSSN…KYFILDNWQR (376 aa). Serine 8, serine 9, serine 26, and serine 39 each carry phosphoserine. The segment covering 21 to 31 has biased composition (polar residues); the sequence is NSDTNSDTESI. A compositionally biased stretch (basic residues) spans 44 to 53; the sequence is RPKRASKKNA. 2 EF-hand-like regions span residues 193–203 and 230–241; these read SADSNGLLLSA and NNVSGDAITKEQ. EF-hand domains lie at 253 to 288 and 297 to 332; these read SFDA…SASA and QAKE…APNQ. The Ca(2+) site is built by aspartate 266, aspartate 268, aspartate 270, arginine 272, and glutamate 277. 3 positions are modified to phosphoserine: serine 339, serine 343, and serine 347. Residues 377 to 397 traverse the membrane as a helical segment; sequence LWIMMLWLGICGGLFTYKFIQ. The Extracellular segment spans residues 398–461; it reads YKNKAAYGVM…FDDSLNFHKV (64 aa). One can recognise a Ferric oxidoreductase domain in the interval 415–572; it reads KGGAETLKFN…LFIIVYALLI (158 aa). A helical membrane pass occupies residues 462–482; sequence IASGIVVGVLLHAGAHLTCDF. The Cytoplasmic portion of the chain corresponds to 483-516; sequence PRLIAADEDTYEPMEKYFGDQPTSYWWFVKGVEG. Residues 517–537 form a helical membrane-spanning segment; the sequence is WTGIVMVVLMAIAFTLATPWF. Residues 538-559 are Extracellular-facing; the sequence is RRNKLNLPNFLKKLTGFNAFWY. A helical membrane pass occupies residues 560–580; that stretch reads THHLFIIVYALLIVHGIKLYL. Topologically, residues 581 to 588 are cytoplasmic; it reads TKIWYQKT. A helical membrane pass occupies residues 589–606; it reads TWMYLAVPILLYASERLL. Topologically, residues 607-734 are extracellular; that stretch reads RAFRSSIKPV…PYGAPAQDYK (128 aa). One can recognise an FAD-binding FR-type domain in the interval 611–732; that stretch reads SSIKPVKMIK…DGPYGAPAQD (122 aa). A helical transmembrane segment spans residues 735–755; that stretch reads KYDVVLLVGLGIGATPMISIL. Over 756 to 921 the chain is Cytoplasmic; it reads KDIINNMKGP…TKFDFHKENF (166 aa).

It belongs to the RBOH (TC 5.B.1.3) family. As to quaternary structure, monomer and homodimer. Interacts with BIK1 and FLS2. Interacts with PBL13. Binds to SIK1 upon flagellin perception and becomes activated by phosphorylation. Phosphorylated at Ser-39, Ser-343 and Ser-347 by BIK1 upon flagellin (flg22) treatment. Activated by phosphorylation at Ser-347 mediated by SIK1 and at Ser-8, Ser-9 and Ser-339 upon flagellin (e.g. flg22) perception. More abundant in roots than in leaves, stems or inflorescences. Expressed in mesophyll and guard cells.

Its subcellular location is the membrane. Its activity is regulated as follows. Inhibited by diphenylene iodinium (DPI). In terms of biological role, calcium-dependent NADPH oxidase that generates superoxide. Involved in the generation of reactive oxygen species (ROS) during incompatible interactions with pathogens, in response to pathogen-associated molecular pattern (PAMP)-triggered immunity (PTI) signaling and in UV-B and abscisic acid ROS-dependent signaling and via SIK1 mediated activation by phosphorylation. Might be required for ROS signal amplification during light stress. The protein is Respiratory burst oxidase homolog protein D of Arabidopsis thaliana (Mouse-ear cress).